Reading from the N-terminus, the 207-residue chain is SPRY domain-containing protein 4 (207 aa).

A B30.2/SPRY domain is found at 12 to 207; it reads YRWGTKRWGV…HSGLEVPKGL (196 aa). N6-acetyllysine occurs at positions 53 and 130. N6-succinyllysine is present on lysine 139.

This chain is SPRY domain-containing protein 4 (Spryd4), found in Mus musculus (Mouse).